We begin with the raw amino-acid sequence, 210 residues long: GGLLKKARELAILCDAQLGVIIFSSSGKMFEFSSPPISMREIIDRYQKLSGNCAPVYDNQQVYCEITRMKNEIDKLQATMRHFAGEDLTSLTMNEMLQLEQQLEISVNKVRSRKEQLLQQQLDNLRRKENMLEEQNRELYRVIQDHHAASMEQKMVDPSMLDHFGVFYQDDHQAARSSMLQLSPQLHPFRLQPAQPNLQDANLLPHDLQL.

The MADS-box domain maps to 1–36; the sequence is GGLLKKARELAILCDAQLGVIIFSSSGKMFEFSSPP. One can recognise a K-box domain in the interval 59 to 149; sequence NQQVYCEITR…YRVIQDHHAA (91 aa).

In terms of tissue distribution, expressed exclusively in the carpel.

The protein localises to the nucleus. Probable transcription factor. The chain is MADS-box protein AeAP3-2 (AP3-2) from Asarum europaeum (Asarabacca).